Reading from the N-terminus, the 145-residue chain is Putative BCoR-like protein 2 (145 aa).

The segment covering 1–27 (MKEKLSKKRAEVKGNRSWLEEFLKPSD) has biased composition (basic and acidic residues). A disordered region spans residues 1–58 (MKEKLSKKRAEVKGNRSWLEEFLKPSDNEEGPPPKNKVLSNNASSQKPTHSSCIPLLR). A compositionally biased stretch (polar residues) spans 38 to 52 (VLSNNASSQKPTHSS).

This sequence belongs to the BCOR family.

In Homo sapiens (Human), this protein is Putative BCoR-like protein 2 (BCORP1).